Reading from the N-terminus, the 168-residue chain is MSLNLEDKKAVVAEIAAQVATAQTIVVAEYRGIEVSSMTKLRAKAREQGVYLRVLKNTLARRAVADTPFAGLADQMVGPLVYGISEDPVAAAKVLNDFAKVDNKIVIKAGSYDGKVLGTAEVAELASIPSRDELLSKLLFVMQAPVSGMARVLAAVAEKKGEGEAVAA.

The protein belongs to the universal ribosomal protein uL10 family. As to quaternary structure, part of the ribosomal stalk of the 50S ribosomal subunit. The N-terminus interacts with L11 and the large rRNA to form the base of the stalk. The C-terminus forms an elongated spine to which L12 dimers bind in a sequential fashion forming a multimeric L10(L12)X complex.

Its function is as follows. Forms part of the ribosomal stalk, playing a central role in the interaction of the ribosome with GTP-bound translation factors. This Laribacter hongkongensis (strain HLHK9) protein is Large ribosomal subunit protein uL10.